Here is a 170-residue protein sequence, read N- to C-terminus: Viral interleukin-10 homolog (170 aa).

Positions 1–23 (MERRLVVTLQCLVLLYLAPECGG) are cleaved as a signal peptide. Intrachain disulfides connect Cys27/Cys119 and Cys73/Cys125. Positions 97 to 145 (EAKDHVNSLGENLKTLRLRLRRCHRFLPCENKSKAVEQIKNAFNKLQEK) form a coiled coil. The N-linked (GlcNAc...) asparagine; by host glycan is linked to Asn127.

Belongs to the IL-10 family. In terms of assembly, homodimer.

The protein resides in the secreted. In terms of biological role, inhibits IFN-gamma synthesis. Down-regulates the expression of the host TAP1 gene (transporter associated with antigen processing), thereby affecting the transport of peptides into the endoplasmic reticulum and subsequent peptide loading by MHC class I molecules. In consequence, infected cells are masked for immune recognition by cytotoxic T-lymphocytes. The chain is Viral interleukin-10 homolog from Epstein-Barr virus (strain AG876) (HHV-4).